A 692-amino-acid polypeptide reads, in one-letter code: Elongation factor G (692 aa).

Residues 8-282 form the tr-type G domain; it reads AKTRNIGIMA…AVIAYLPSPL (275 aa). Residues 17-24, 81-85, and 135-138 contribute to the GTP site; these read AHVDAGKT, DTPGH, and NKMD.

This sequence belongs to the TRAFAC class translation factor GTPase superfamily. Classic translation factor GTPase family. EF-G/EF-2 subfamily.

It localises to the cytoplasm. Catalyzes the GTP-dependent ribosomal translocation step during translation elongation. During this step, the ribosome changes from the pre-translocational (PRE) to the post-translocational (POST) state as the newly formed A-site-bound peptidyl-tRNA and P-site-bound deacylated tRNA move to the P and E sites, respectively. Catalyzes the coordinated movement of the two tRNA molecules, the mRNA and conformational changes in the ribosome. The sequence is that of Elongation factor G (fus) from Streptococcus pyogenes serotype M1.